We begin with the raw amino-acid sequence, 89 residues long: Small ribosomal subunit protein bS18 (89 aa).

Positions 1 to 15 are enriched in low complexity; the sequence is MTTANTNETAAAAAA. Residues 1–22 are disordered; it reads MTTANTNETAAAAAAKNRRNKK.

The protein belongs to the bacterial ribosomal protein bS18 family. In terms of assembly, part of the 30S ribosomal subunit. Forms a tight heterodimer with protein bS6.

Binds as a heterodimer with protein bS6 to the central domain of the 16S rRNA, where it helps stabilize the platform of the 30S subunit. This Caldanaerobacter subterraneus subsp. tengcongensis (strain DSM 15242 / JCM 11007 / NBRC 100824 / MB4) (Thermoanaerobacter tengcongensis) protein is Small ribosomal subunit protein bS18.